We begin with the raw amino-acid sequence, 363 residues long: Exopolygalacturonase rpg13 (363 aa).

The signal sequence occupies residues 1–26; that stretch reads MVKFLSLTSSVTALLLLSLGANGVAA. N-linked (GlcNAc...) asparagine glycosylation is found at Asn121, Asn142, and Asn150. PbH1 repeat units follow at residues 143–173, 174–195, 197–217, 227–248, and 256–277; these read ATDV…DVSR, SSNV…AINE, VTNV…SVGS, VKTV…RIKT, and VSDI…LITT. The active-site Proton donor is Asp188. A disulfide bridge links Cys190 with Cys207. Asn199 carries N-linked (GlcNAc...) asparagine glycosylation. His211 is a catalytic residue. N-linked (GlcNAc...) asparagine glycosylation is present at Asn321. Cys322 and Cys328 are oxidised to a cystine. A PbH1 6 repeat occupies 328–354; that stretch reads CTDFTLSGVKITKASNTPKNVCVNLDG.

This sequence belongs to the glycosyl hydrolase 28 family. N-glycosylated.

It is found in the secreted. The catalysed reaction is [(1-&gt;4)-alpha-D-galacturonosyl](n) + H2O = alpha-D-galacturonate + [(1-&gt;4)-alpha-D-galacturonosyl](n-1). Specific in hydrolyzing the terminal glycosidic bond of polygalacturonic acid and oligogalacturonates. Has no activity towards trigalacturonic acid. The polypeptide is Exopolygalacturonase rpg13 (Rhizopus delemar (strain RA 99-880 / ATCC MYA-4621 / FGSC 9543 / NRRL 43880) (Mucormycosis agent)).